We begin with the raw amino-acid sequence, 76 residues long: U14-hexatoxin-Hi1a (76 aa).

The first 18 residues, 1–18 (MMQLAVLICLSLVVNTFA), serve as a signal peptide directing secretion. 3 disulfide bridges follow: Cys-21-Cys-34, Cys-27-Cys-39, and Cys-33-Cys-61.

Expressed by the venom gland.

It is found in the secreted. Probable ion channel inhibitor. This chain is U14-hexatoxin-Hi1a, found in Hadronyche infensa (Fraser island funnel-web spider).